The chain runs to 172 residues: Biogenesis of lysosome-related organelles complex 1 subunit 6 (172 aa).

Disordered stretches follow at residues 1–36 (MSVP…SPDE) and 135–172 (RALK…AKRM). Positions 63-167 (DLQRSKQALQ…FEREKQLTAR (105 aa)) form a coiled coil. The span at 143–164 (RQKEELEREQQREKEFEREKQL) shows a compositional bias: basic and acidic residues.

Belongs to the BLOC1S6 family. Interacts with BLOC1S4 and DTNBP1/BLOC1S7. Homodimer. Component of the biogenesis of lysosome-related organelles complex 1 (BLOC-1) composed of BLOC1S1, BLOC1S2, BLOC1S3, BLOC1S4, BLOC1S5, BLOC1S6, DTNBP1/BLOC1S7 and SNAPIN/BLOC1S8. Octamer composed of one copy each BLOC1S1, BLOC1S2, BLOC1S3, BLOC1S4, BLOC1S5, BLOC1S6, DTNBP1/BLOC1S7 and SNAPIN/BLOC1S8. The BLOC-1 complex associates with the AP-3 protein complex and membrane protein cargos. Interacts with BLOC1S5, F-actin, SNAP25 isoform 1 and isoform 2, SNAP47 and STX12. In terms of processing, phosphorylated. Widely expressed.

It is found in the cytoplasm. It localises to the membrane. Its function is as follows. Component of the BLOC-1 complex, a complex that is required for normal biogenesis of lysosome-related organelles (LRO), such as platelet dense granules and melanosomes. In concert with the AP-3 complex, the BLOC-1 complex is required to target membrane protein cargos into vesicles assembled at cell bodies for delivery into neurites and nerve terminals. The BLOC-1 complex, in association with SNARE proteins, is also proposed to be involved in neurite extension. May play a role in intracellular vesicle trafficking, particularly in the vesicle-docking and fusion process. This chain is Biogenesis of lysosome-related organelles complex 1 subunit 6 (BLOC1S6), found in Homo sapiens (Human).